We begin with the raw amino-acid sequence, 194 residues long: ATP-dependent Clp protease proteolytic subunit (194 aa).

Serine 98 serves as the catalytic Nucleophile. Histidine 123 is a catalytic residue.

Belongs to the peptidase S14 family. Fourteen ClpP subunits assemble into 2 heptameric rings which stack back to back to give a disk-like structure with a central cavity, resembling the structure of eukaryotic proteasomes.

It localises to the cytoplasm. It carries out the reaction Hydrolysis of proteins to small peptides in the presence of ATP and magnesium. alpha-casein is the usual test substrate. In the absence of ATP, only oligopeptides shorter than five residues are hydrolyzed (such as succinyl-Leu-Tyr-|-NHMec, and Leu-Tyr-Leu-|-Tyr-Trp, in which cleavage of the -Tyr-|-Leu- and -Tyr-|-Trp bonds also occurs).. In terms of biological role, cleaves peptides in various proteins in a process that requires ATP hydrolysis. Has a chymotrypsin-like activity. Plays a major role in the degradation of misfolded proteins. This Wigglesworthia glossinidia brevipalpis protein is ATP-dependent Clp protease proteolytic subunit.